We begin with the raw amino-acid sequence, 163 residues long: NADH-quinone oxidoreductase subunit I (163 aa).

2 consecutive 4Fe-4S ferredoxin-type domains span residues L53–G83 and V94–N123. Residues C63, C66, C69, C73, C103, C106, C109, and C113 each contribute to the [4Fe-4S] cluster site.

The protein belongs to the complex I 23 kDa subunit family. In terms of assembly, NDH-1 is composed of 14 different subunits. Subunits NuoA, H, J, K, L, M, N constitute the membrane sector of the complex. Requires [4Fe-4S] cluster as cofactor.

The protein resides in the cell inner membrane. It carries out the reaction a quinone + NADH + 5 H(+)(in) = a quinol + NAD(+) + 4 H(+)(out). Functionally, NDH-1 shuttles electrons from NADH, via FMN and iron-sulfur (Fe-S) centers, to quinones in the respiratory chain. The immediate electron acceptor for the enzyme in this species is believed to be ubiquinone. Couples the redox reaction to proton translocation (for every two electrons transferred, four hydrogen ions are translocated across the cytoplasmic membrane), and thus conserves the redox energy in a proton gradient. The protein is NADH-quinone oxidoreductase subunit I of Brucella anthropi (strain ATCC 49188 / DSM 6882 / CCUG 24695 / JCM 21032 / LMG 3331 / NBRC 15819 / NCTC 12168 / Alc 37) (Ochrobactrum anthropi).